Here is a 348-residue protein sequence, read N- to C-terminus: Phospho-2-dehydro-3-deoxyheptonate aldolase, Trp-sensitive (348 aa).

It belongs to the class-I DAHP synthase family.

The catalysed reaction is D-erythrose 4-phosphate + phosphoenolpyruvate + H2O = 7-phospho-2-dehydro-3-deoxy-D-arabino-heptonate + phosphate. It functions in the pathway metabolic intermediate biosynthesis; chorismate biosynthesis; chorismate from D-erythrose 4-phosphate and phosphoenolpyruvate: step 1/7. Stereospecific condensation of phosphoenolpyruvate (PEP) and D-erythrose-4-phosphate (E4P) giving rise to 3-deoxy-D-arabino-heptulosonate-7-phosphate (DAHP). This chain is Phospho-2-dehydro-3-deoxyheptonate aldolase, Trp-sensitive (aroH), found in Escherichia coli O157:H7.